The chain runs to 270 residues: Shikimate dehydrogenase (NADP(+)) (270 aa).

Shikimate-binding positions include 14–16 and T61; that span reads SLS. The active-site Proton acceptor is K65. D77 is an NADP(+) binding site. Residues N86 and D101 each coordinate shikimate. Residues 125–129 and I210 each bind NADP(+); that span reads GNGGA. Y212 lines the shikimate pocket. G233 lines the NADP(+) pocket.

It belongs to the shikimate dehydrogenase family. As to quaternary structure, homodimer.

It carries out the reaction shikimate + NADP(+) = 3-dehydroshikimate + NADPH + H(+). It functions in the pathway metabolic intermediate biosynthesis; chorismate biosynthesis; chorismate from D-erythrose 4-phosphate and phosphoenolpyruvate: step 4/7. Functionally, involved in the biosynthesis of the chorismate, which leads to the biosynthesis of aromatic amino acids. Catalyzes the reversible NADPH linked reduction of 3-dehydroshikimate (DHSA) to yield shikimate (SA). This is Shikimate dehydrogenase (NADP(+)) from Clostridium beijerinckii (strain ATCC 51743 / NCIMB 8052) (Clostridium acetobutylicum).